We begin with the raw amino-acid sequence, 870 residues long: DNA mismatch repair protein MutS (870 aa).

ATP is bound at residue 629–636; that stretch reads GPNMGGKS.

Belongs to the DNA mismatch repair MutS family.

Its function is as follows. This protein is involved in the repair of mismatches in DNA. It is possible that it carries out the mismatch recognition step. This protein has a weak ATPase activity. In Polaromonas naphthalenivorans (strain CJ2), this protein is DNA mismatch repair protein MutS.